The sequence spans 371 residues: Deoxyhypusine synthase (371 aa).

NAD(+)-binding positions include 112 to 116 (SNLVT), 138 to 140 (SAG), Glu-144, and Asp-245. 143–144 (EE) contacts spermidine. A spermidine-binding site is contributed by Asp-250. Gly-291 serves as a coordination point for NAD(+). Residue His-296 coordinates spermidine. An NAD(+)-binding site is contributed by 316 to 317 (TG). Residues 322 to 324 (GSD) and 331 to 337 (EAVSWGK) each bind spermidine. Lys-337 serves as the catalytic Nucleophile. 350-351 (EA) is an NAD(+) binding site.

It belongs to the deoxyhypusine synthase family. NAD(+) serves as cofactor.

It catalyses the reaction [eIF5A protein]-L-lysine + spermidine = [eIF5A protein]-deoxyhypusine + propane-1,3-diamine. The protein operates within protein modification; eIF5A hypusination. Catalyzes the NAD-dependent oxidative cleavage of spermidine and the subsequent transfer of the butylamine moiety of spermidine to the epsilon-amino group of a critical lysine residue of the eIF-5A precursor protein to form the intermediate deoxyhypusine residue. This is the first step of the post-translational modification of that lysine into an unusual amino acid residue named hypusine. Hypusination is unique to mature eIF-5A factor and is essential for its function. This chain is Deoxyhypusine synthase, found in Caenorhabditis elegans.